Reading from the N-terminus, the 125-residue chain is S-adenosylmethionine decarboxylase proenzyme (125 aa).

Ser71 serves as the catalytic Schiff-base intermediate with substrate; via pyruvic acid. Ser71 carries the post-translational modification Pyruvic acid (Ser); by autocatalysis. The active-site Proton acceptor; for processing activity is the His76. The active-site Proton donor; for catalytic activity is the Cys91.

Belongs to the prokaryotic AdoMetDC family. Type 1 subfamily. Heterotetramer of two alpha and two beta chains arranged as a dimer of alpha/beta heterodimers. The cofactor is pyruvate. In terms of processing, is synthesized initially as an inactive proenzyme. Formation of the active enzyme involves a self-maturation process in which the active site pyruvoyl group is generated from an internal serine residue via an autocatalytic post-translational modification. Two non-identical subunits are generated from the proenzyme in this reaction, and the pyruvate is formed at the N-terminus of the alpha chain, which is derived from the carboxyl end of the proenzyme. The post-translation cleavage follows an unusual pathway, termed non-hydrolytic serinolysis, in which the side chain hydroxyl group of the serine supplies its oxygen atom to form the C-terminus of the beta chain, while the remainder of the serine residue undergoes an oxidative deamination to produce ammonia and the pyruvoyl group blocking the N-terminus of the alpha chain.

The enzyme catalyses S-adenosyl-L-methionine + H(+) = S-adenosyl 3-(methylsulfanyl)propylamine + CO2. The protein operates within amine and polyamine biosynthesis; S-adenosylmethioninamine biosynthesis; S-adenosylmethioninamine from S-adenosyl-L-methionine: step 1/1. Catalyzes the decarboxylation of S-adenosylmethionine to S-adenosylmethioninamine (dcAdoMet), the propylamine donor required for the synthesis of the polyamines spermine and spermidine from the diamine putrescine. This is S-adenosylmethionine decarboxylase proenzyme from Pyrobaculum islandicum (strain DSM 4184 / JCM 9189 / GEO3).